We begin with the raw amino-acid sequence, 81 residues long: ATP synthase subunit c, chloroplastic (81 aa).

2 consecutive transmembrane segments (helical) span residues 3–23 (PIIS…ASIG) and 57–77 (LAFM…LLFA).

This sequence belongs to the ATPase C chain family. As to quaternary structure, F-type ATPases have 2 components, F(1) - the catalytic core - and F(0) - the membrane proton channel. F(1) has five subunits: alpha(3), beta(3), gamma(1), delta(1), epsilon(1). F(0) has four main subunits: a(1), b(1), b'(1) and c(10-14). The alpha and beta chains form an alternating ring which encloses part of the gamma chain. F(1) is attached to F(0) by a central stalk formed by the gamma and epsilon chains, while a peripheral stalk is formed by the delta, b and b' chains.

The protein resides in the plastid. It localises to the chloroplast thylakoid membrane. Functionally, f(1)F(0) ATP synthase produces ATP from ADP in the presence of a proton or sodium gradient. F-type ATPases consist of two structural domains, F(1) containing the extramembraneous catalytic core and F(0) containing the membrane proton channel, linked together by a central stalk and a peripheral stalk. During catalysis, ATP synthesis in the catalytic domain of F(1) is coupled via a rotary mechanism of the central stalk subunits to proton translocation. Its function is as follows. Key component of the F(0) channel; it plays a direct role in translocation across the membrane. A homomeric c-ring of between 10-14 subunits forms the central stalk rotor element with the F(1) delta and epsilon subunits. The polypeptide is ATP synthase subunit c, chloroplastic (Welwitschia mirabilis (Tree tumbo)).